The chain runs to 177 residues: ATP synthase subunit delta (177 aa).

It belongs to the ATPase delta chain family. In terms of assembly, F-type ATPases have 2 components, F(1) - the catalytic core - and F(0) - the membrane proton channel. F(1) has five subunits: alpha(3), beta(3), gamma(1), delta(1), epsilon(1). F(0) has three main subunits: a(1), b(2) and c(10-14). The alpha and beta chains form an alternating ring which encloses part of the gamma chain. F(1) is attached to F(0) by a central stalk formed by the gamma and epsilon chains, while a peripheral stalk is formed by the delta and b chains.

The protein localises to the cell inner membrane. Its function is as follows. F(1)F(0) ATP synthase produces ATP from ADP in the presence of a proton or sodium gradient. F-type ATPases consist of two structural domains, F(1) containing the extramembraneous catalytic core and F(0) containing the membrane proton channel, linked together by a central stalk and a peripheral stalk. During catalysis, ATP synthesis in the catalytic domain of F(1) is coupled via a rotary mechanism of the central stalk subunits to proton translocation. Functionally, this protein is part of the stalk that links CF(0) to CF(1). It either transmits conformational changes from CF(0) to CF(1) or is implicated in proton conduction. The sequence is that of ATP synthase subunit delta from Azobacteroides pseudotrichonymphae genomovar. CFP2.